A 189-amino-acid chain; its full sequence is Vacuolar iron transporter homolog 2 (189 aa).

Residues 1–10 (MARAQWLRAA) are Cytoplasmic-facing. Residues 11–31 (VLGANDGLVSVASLMIGIGAV) form a helical membrane-spanning segment. Residues 32-38 (NENNKAM) are Vacuolar-facing. A helical transmembrane segment spans residues 39–59 (LVSGLAGLVAGACSMAIGEFV). Residues 60-97 (SVYAQYDIEVTQIERDGDIDGADAAAAREKLPSPTQAA) are Cytoplasmic-facing. The helical transmembrane segment at 98 to 118 (FASALAFAIGGLLPLLTSGFI) threads the bilayer. At 119–124 (KPWGPR) the chain is on the vacuolar side. A helical membrane pass occupies residues 125–145 (VGVVCAASSVGLAGFGAAGGY). The Cytoplasmic portion of the chain corresponds to 146–159 (LGGANMVRSGTRVL). The chain crosses the membrane as a helical span at residues 160-180 (LGGWLAMLITYAVLRLFATIF). The Vacuolar portion of the chain corresponds to 181-189 (HGMNISSSA).

The protein belongs to the CCC1 family.

The protein resides in the vacuole membrane. It carries out the reaction Fe(2+)(in) = Fe(2+)(out). Functionally, probable vacuolar iron transporter that may be involved in the regulation of iron distribution throughout the plant. The protein is Vacuolar iron transporter homolog 2 of Oryza sativa subsp. japonica (Rice).